A 173-amino-acid chain; its full sequence is MAEKRNIFLVGPMGAGKSTIGRQLAQQLNMEFYDSDQEIEKRTGADVGWVFDLEGEEGFRDREEKVINELTEKQGIVLATGGGSVKSRETRNRLSARGVVVYLETTIEKQLARTQRDKKRPLLHVETPPREVLEALANERNPLYEEIADVTIRTDDQSAKVVANQIIHMLESN.

An ATP-binding site is contributed by 14-19 (GAGKST). Ser18 contributes to the Mg(2+) binding site. Residues Asp36, Arg60, and Gly82 each coordinate substrate. Arg120 is a binding site for ATP. Arg140 contacts substrate. Gln157 contacts ATP.

Belongs to the shikimate kinase family. As to quaternary structure, monomer. Mg(2+) serves as cofactor.

It is found in the cytoplasm. The catalysed reaction is shikimate + ATP = 3-phosphoshikimate + ADP + H(+). It functions in the pathway metabolic intermediate biosynthesis; chorismate biosynthesis; chorismate from D-erythrose 4-phosphate and phosphoenolpyruvate: step 5/7. In terms of biological role, catalyzes the specific phosphorylation of the 3-hydroxyl group of shikimic acid using ATP as a cosubstrate. The protein is Shikimate kinase 1 of Shigella boydii serotype 18 (strain CDC 3083-94 / BS512).